A 226-amino-acid chain; its full sequence is Ras-related protein RABA4a (226 aa).

The residue at position 2 (T2) is an N-acetylthreonine. 24–31 (GDSAVGKS) serves as a coordination point for GTP. Residues 46–54 (SKATIGVEF) carry the Effector region motif. Residues 72 to 76 (DTAGQ), 130 to 133 (NKSD), and 160 to 161 (SA) each bind GTP. Residues 189–226 (ASEDQENGNPGSLAGKKIDIVPGPGQVIPNKSNMCCNS) form a disordered region. The segment covering 217–226 (PNKSNMCCNS) has biased composition (polar residues). Residues C223 and C224 are each lipidated (S-geranylgeranyl cysteine).

This sequence belongs to the small GTPase superfamily. Rab family. In terms of assembly, interacts with TCTP1.

It is found in the cell membrane. Functionally, intracellular vesicle trafficking and protein transport. In Arabidopsis thaliana (Mouse-ear cress), this protein is Ras-related protein RABA4a.